We begin with the raw amino-acid sequence, 209 residues long: Transcription antitermination protein NusB (209 aa).

Belongs to the NusB family.

Functionally, involved in transcription antitermination. Required for transcription of ribosomal RNA (rRNA) genes. Binds specifically to the boxA antiterminator sequence of the ribosomal RNA (rrn) operons. This Cyanothece sp. (strain PCC 7425 / ATCC 29141) protein is Transcription antitermination protein NusB.